A 617-amino-acid chain; its full sequence is Protein kinase STUNTED (617 aa).

Residues 162–187 are disordered; that stretch reads SSELSEGFSDKDLAKTTGQEKRKISG. Basic and acidic residues predominate over residues 169-184; it reads FSDKDLAKTTGQEKRK. A Protein kinase domain is found at 277–555; it reads FSLENLIGKG…RGEDDVSKWV (279 aa). Residues 283–291 and Lys305 each bind ATP; that span reads IGKGGCNEV. Position 350 is a phosphotyrosine (Tyr350). Asp399 functions as the Proton acceptor in the catalytic mechanism. Phosphoserine is present on Ser403. Position 439 is a phosphothreonine (Thr439). The residue at position 447 (Tyr447) is a Phosphotyrosine. The disordered stretch occupies residues 590-617; it reads DSVSNSSLERSNNSLFSSSSSSSQELQS. Over residues 591–617 the composition is skewed to low complexity; it reads SVSNSSLERSNNSLFSSSSSSSQELQS.

This sequence belongs to the protein kinase superfamily. Ser/Thr protein kinase family. Expressed ubiquitously, mostly in roots, to a lower extent in leaves, floral buds and stems, and, at low levels, in flowers and siliques.

It localises to the cytoplasm. Its function is as follows. Promotes cell proliferation in the gibberellic acid (GA) signaling pathway, acting downstream of RGA, and possibly through a negative regulation of two cyclin-dependent kinase inhibitors SIM and SMR1. In Arabidopsis thaliana (Mouse-ear cress), this protein is Protein kinase STUNTED.